The sequence spans 122 residues: Basic phospholipase A2 homolog (122 aa).

7 cysteine pairs are disulfide-bonded: C26–C115, C28–C44, C43–C95, C49–C122, C50–C88, C57–C81, and C75–C86. Residues 105 to 117 form an important for membrane-damaging activities in eukaryotes and bacteria; heparin-binding region; the sequence is KRYMTYPNILCSS.

It belongs to the phospholipase A2 family. Group II subfamily. N49 sub-subfamily. In terms of tissue distribution, expressed by the venom gland.

The protein localises to the secreted. This Gloydius halys (Chinese water mocassin) protein is Basic phospholipase A2 homolog.